Consider the following 197-residue polypeptide: Imidazoleglycerol-phosphate dehydratase (197 aa).

Belongs to the imidazoleglycerol-phosphate dehydratase family.

The protein localises to the cytoplasm. It carries out the reaction D-erythro-1-(imidazol-4-yl)glycerol 3-phosphate = 3-(imidazol-4-yl)-2-oxopropyl phosphate + H2O. It functions in the pathway amino-acid biosynthesis; L-histidine biosynthesis; L-histidine from 5-phospho-alpha-D-ribose 1-diphosphate: step 6/9. This chain is Imidazoleglycerol-phosphate dehydratase, found in Nitrosococcus oceani (strain ATCC 19707 / BCRC 17464 / JCM 30415 / NCIMB 11848 / C-107).